The chain runs to 210 residues: CLAVATA3/ESR (CLE)-related protein 4D (210 aa).

A signal peptide spans 1–21 (MAKNAMLCLLILSVVLALAFA). The required for secretion from the host cytoplasm to the host apoplasm stretch occupies residues 21–83 (ATNKKDDEEP…SNQLPNNNWM (63 aa)). 2 N-linked (GlcNAc...) asparagine glycosylation sites follow: N32 and N59. Residues 115 to 210 (RRKTGTHSQR…APAGPDPIHH (96 aa)) are disordered. Basic and acidic residues-rich tracts occupy residues 125 to 137 (HHEE…EKRG), 144 to 158 (PIHH…EKRG), 165 to 179 (PIHH…EKRV), and 186 to 200 (PIHH…EKRG). Residues 127–135 (EETTLEQEK) form an A-1 repeat. Residues 129–198 (TTLEQEKRGA…HQDTKFEQEK (70 aa)) are 4 X approximate repeat A. A CLE-1 repeat occupies 136–147 (RGAPAGPDPIHH). Residues 136 to 210 (RGAPAGPDPI…APAGPDPIHH (75 aa)) are 4 X approximate repeat CLE. The stretch at 148–156 (QDTTFEQEK) is one A-2 repeat. The CLE-2 repeat unit spans residues 157-168 (RGAPAGPDPIHH). The stretch at 169–177 (QDTTLEQEK) is one A-3 repeat. One copy of the CLE-3 repeat lies at 178-189 (RVAGAGPDPIHH). The stretch at 190–198 (QDTKFEQEK) is one A-4 repeat. The CLE-4 repeat unit spans residues 199 to 210 (RGAPAGPDPIHH).

This sequence belongs to the CLV3/ESR signal peptide family. In terms of tissue distribution, highly expressed exclusively within the dorsal esophageal gland cell during syncytium formation in host plants.

It is found in the secreted. Its subcellular location is the host cytoplasm. The protein resides in the host extracellular space. It localises to the extracellular space. The protein localises to the apoplast. In terms of biological role, mimics host plant CLE extracellular signal peptides that regulate cell fate. May play a role in the differentiation or division of feeding cells (syncytia) induced in plant roots during infection. The protein is CLAVATA3/ESR (CLE)-related protein 4D (CLE-4D) of Globodera rostochiensis (Golden nematode worm).